A 439-amino-acid chain; its full sequence is MMHAFHHLAVLLIGSLPASASTLPHPDGYRHVNGSCSKSVAVPAVWNGFGYLFNITVGTPPQELTMLSDWTWMSLFVRSGRCLNQYDPSLCLGTSGQTWFDERASTSFANTSLPQLSWPLTAFAPNFTVDYGTDDVCIGDLCSAGTVLQVSDFPYPGEGIPKVPFSGIFGMAPVTAGLNETFHPANYQAWKAGRLGSRVGWNSCAALASSDPCLGGEAKLVFGGTDSSLYDDDTLRIYEIQNPDWLSDAFYPLTPPRENYWTTPLTGSWILGTSEEESRNFAVPFSGSNGSNVTPLAVLDEGSEGLGAPLSLNAYNWLVDQVRGTLASNDTIEEIHAQGSSGFNTAEQNWYTVSCDDIDSYPELVYELNGHTNYTVPPQDYVTKLSDSSTCYLNINLWKYGRTEDGNAKVALLGLAFLKRLYVVLDFETQSFGLAPLSM.

Residues methionine 1–alanine 20 form the signal peptide. N-linked (GlcNAc...) asparagine glycosylation is found at asparagine 33 and asparagine 54. Positions tyrosine 51–alanine 435 constitute a Peptidase A1 domain. Aspartate 69 is a catalytic residue. Asparagine 110, asparagine 126, asparagine 179, and asparagine 289 each carry an N-linked (GlcNAc...) asparagine glycan. The active site involves aspartate 300. 2 N-linked (GlcNAc...) asparagine glycosylation sites follow: asparagine 329 and asparagine 373. Cysteine 355 and cysteine 391 are oxidised to a cystine.

Belongs to the peptidase A1 family.

Its subcellular location is the secreted. Its function is as follows. Secreted aspartic protease; part of the gene cluster that mediates the biosynthesis of the mycotoxin lucilactaene and the lucilactaene-related compound NG-391 that act as cell cycle inhibitors with potent growth inhibitory activity against malarial parasites, moderate growth inhibitory activity against cancer cells, and no activity against bacteria and fungi. Within the cluster, LUC7 and LUC8 encode proteins which are not commonly involved in the biosynthesis of secondary metabolites and are not essential for lucilactaene biosynthesis. In Fusarium sp, this protein is Secreted aspartic protease LUC8.